The following is a 532-amino-acid chain: Protein kinase domain-containing protein ppk9 (532 aa).

The 252-residue stretch at 23-274 folds into the Protein kinase domain; that stretch reads WLLGRTLGQG…VAEIMQHPWF (252 aa). ATP-binding positions include 29-37 and lysine 52; that span reads LGQGNLAKV. The active-site Proton acceptor is the aspartate 145. Residues 316–346 show a composition bias toward polar residues; sequence PSSSVGQIPQPTDHSALSPSKPMSISGTESP. The interval 316 to 349 is disordered; the sequence is PSSSVGQIPQPTDHSALSPSKPMSISGTESPNPD.

The protein localises to the cytoplasm. Its subcellular location is the nucleus. It is found in the cytoskeleton. It localises to the microtubule organizing center. The protein resides in the spindle pole body. This is Protein kinase domain-containing protein ppk9 (ppk9) from Schizosaccharomyces pombe (strain 972 / ATCC 24843) (Fission yeast).